The following is a 276-amino-acid chain: Elongation factor Ts (276 aa).

Residues 79 to 82 are involved in Mg(2+) ion dislocation from EF-Tu; the sequence is TDFV.

The protein belongs to the EF-Ts family.

The protein resides in the cytoplasm. Associates with the EF-Tu.GDP complex and induces the exchange of GDP to GTP. It remains bound to the aminoacyl-tRNA.EF-Tu.GTP complex up to the GTP hydrolysis stage on the ribosome. In Buchnera aphidicola subsp. Cinara cedri (strain Cc), this protein is Elongation factor Ts.